Reading from the N-terminus, the 223-residue chain is Cytotoxic T-lymphocyte protein 4 (223 aa).

The first 35 residues, 1–35, serve as a signal peptide directing secretion; it reads MACLGLRRYKAQLQLPSRTWPFVALLTLLFIPVFS. Residues 36–145 form the Ig-like V-type domain; the sequence is EAIQVTQPSV…PPPYFVGMGN (110 aa). Over 36-161 the chain is Extracellular; that stretch reads EAIQVTQPSV…IDPEPCPDSD (126 aa). The tract at residues 46–50 is homodimerization; sequence VLASS. 2 cysteine pairs are disulfide-bonded: cysteine 58–cysteine 129 and cysteine 85–cysteine 103. Residues asparagine 108 and asparagine 113 are each glycosylated (N-linked (GlcNAc...) asparagine). The tract at residues 134-139 is important for interaction with CD80 and CD86; it reads MYPPPY. N-linked (GlcNAc...) asparagine glycosylation is present at asparagine 145. Positions 150–155 are homodimerization; that stretch reads YVIDPE. The chain crosses the membrane as a helical span at residues 162 to 182; sequence FLLWILVAVSLGLFFYSFLVS. The Cytoplasmic portion of the chain corresponds to 183–223; sequence AVSLSKMLKKRSPLTTGVYVKMPPTEPECEKQFQPYFIPIN. Tyrosine 201 bears the Phosphotyrosine; by TXK and JAK2 mark.

As to quaternary structure, homodimer; disulfide-linked. Binds to CD80/B7-1 and CD86/B7.2. Interacts with ICOSLG. N-glycosylation is important for dimerization. In terms of processing, phosphorylation at Tyr-201 prevents binding to the AP-2 adapter complex, blocks endocytosis, and leads to retention of CTLA4 on the cell surface. Widely expressed with highest levels in lymphoid tissues.

The protein resides in the cell membrane. Functionally, inhibitory receptor acting as a major negative regulator of T-cell responses. The affinity of CTLA4 for its natural B7 family ligands, CD80 and CD86, is considerably stronger than the affinity of their cognate stimulatory coreceptor CD28. The chain is Cytotoxic T-lymphocyte protein 4 (Ctla4) from Mus musculus (Mouse).